The following is a 135-amino-acid chain: Large ribosomal subunit protein uL16c (135 aa).

It belongs to the universal ribosomal protein uL16 family. In terms of assembly, part of the 50S ribosomal subunit.

It is found in the plastid. It localises to the chloroplast. The polypeptide is Large ribosomal subunit protein uL16c (Drimys granadensis).